The primary structure comprises 209 residues: Ephrin-A2 (209 aa).

A signal peptide spans 1 to 20 (MAPAQRPLLPLLLLLLPLRA). One can recognise an Ephrin RBD domain in the interval 30 to 170 (ADRYAVYWNR…RLKVYVRPTN (141 aa)). Asn-38 carries N-linked (GlcNAc...) asparagine glycosylation. 2 disulfides stabilise this stretch: Cys-69–Cys-110 and Cys-98–Cys-159. Asn-170 and Asn-184 each carry an N-linked (GlcNAc...) asparagine glycan. Asn-184 carries GPI-anchor amidated asparagine lipidation. Positions 185–209 (SSCSGLGGCHLFLTTVPVLWSLLGS) are cleaved as a propeptide — removed in mature form.

This sequence belongs to the ephrin family. As to quaternary structure, binds to the receptor tyrosine kinases EPHA3, EPHA4 and EPHA5. Interacts with EPHA8; activates EPHA8. As to expression, expressed in myogenic progenitor cells.

It is found in the cell membrane. Cell surface GPI-bound ligand for Eph receptors, a family of receptor tyrosine kinases which are crucial for migration, repulsion and adhesion during neuronal, vascular and epithelial development. Binds promiscuously Eph receptors residing on adjacent cells, leading to contact-dependent bidirectional signaling into neighboring cells. The signaling pathway downstream of the receptor is referred to as forward signaling while the signaling pathway downstream of the ephrin ligand is referred to as reverse signaling. With the EPHA2 receptor may play a role in bone remodeling through regulation of osteoclastogenesis and osteoblastogenesis. The polypeptide is Ephrin-A2 (Efna2) (Mus musculus (Mouse)).